We begin with the raw amino-acid sequence, 910 residues long: MGTGTLSSLLLLLLLVTIGDADMKGHFDPAKCRYALGMQDRTIPDSDISVSSSWSDSTAARHSRLESSDGDGAWCPAGPVFPKEEEYLQVDLRRLHLVALVGTQGRHAGGLGKEFSRSYRLRYSRDGRRWMDWKDRWGQEVISGNEDPGGVVLKDLGPPMVARLVRFYPRADRVMSVCLRVELYGCLWRDGLLSYTAPVGQTMQLSEMVYLNDSTYDGYTAGGLQYGGLGQLADGVVGLDDFRQSQELRVWPGYDYVGWSNHSFPSGYVEMEFEFDRLRSFQTMQVHCNNMHTLGARLPGGVECRFKRGPAMAWEGEPVHHALGGSLGDPRARAISVPLGGHVGRFLQCRFLFAGPWLLFSEISFISDVVNDSSDTFPPAPWWPPGPPPTNFSSLELEPRGQQPVAKAEGSPTAILIGCLVAIILLLLLIIALMLWRLHWRRLLSKAERRVLEEELTVHLSVPGDTILINNRPGPREPPPYQEPRPRGTPTHSAPCVPNGSALLLSNPAYRLLLATYARPPRGPGPPTPAWAKPTNTQACSGDYMEPEKPGAPLLPPPPQNSVPHYAEADIVTLQGVTGGNTYAVPALPPGAVGDGPPRVDFPRSRLRFKEKLGEGQFGEVHLCEVEDPQDLVTSDFPISVQKGHPLLVAVKILRPDATKNARNDFLKEVKIMSRLKDLNIIRLLGVCVQDDPLCMITDYMENGDLNQFLSAHQLENKVTQGLPGDRESDQGPTISYPMLLHVGAQIASGMRYLATLNFVHRDLATRNCLVGENFTIKIADFGMSRNLYAGDYYRVQGRAVLPIRWMAWECILMGKFTTASDVWAFGVTLWEVLMLCRSQPFGQLTDEQVIENAGEFFRDQGRQVYLSRPPACPQTLYELMLRCWSREPEQRPPFSQLHRFLADDALNTV.

The first 19 residues, 1–19 (MGTGTLSSLLLLLLLVTIG), serve as a signal peptide directing secretion. The Extracellular segment spans residues 22-414 (DMKGHFDPAK…VAKAEGSPTA (393 aa)). The F5/8 type C domain occupies 32 to 186 (CRYALGMQDR…VCLRVELYGC (155 aa)). Disulfide bonds link cysteine 32/cysteine 186 and cysteine 75/cysteine 178. A DS-like domain region spans residues 193–368 (LSYTAPVGQT…LFSEISFISD (176 aa)). The Ca(2+) site is built by asparagine 212, glutamine 231, aspartate 234, valine 236, tyrosine 254, and tyrosine 256. Residue asparagine 212 is glycosylated (N-linked (GlcNAc...) asparagine). Residue asparagine 261 is glycosylated (N-linked (GlcNAc...) asparagine). Residues cysteine 304 and cysteine 349 are joined by a disulfide bond. Ca(2+) contacts are provided by serine 361 and glutamate 362. Asparagine 371 and asparagine 391 each carry an N-linked (GlcNAc...) asparagine glycan. A helical membrane pass occupies residues 415–435 (ILIGCLVAIILLLLLIIALML). Over 436–910 (WRLHWRRLLS…FLADDALNTV (475 aa)) the chain is Cytoplasmic. The interval 467–494 (ILINNRPGPREPPPYQEPRPRGTPTHSA) is disordered. Residues 478-481 (PPPY) carry the PPxY motif motif. Phosphotyrosine; by autocatalysis occurs at positions 481, 510, and 517. One can recognise a Protein kinase domain in the interval 607-902 (LRFKEKLGEG…PPFSQLHRFL (296 aa)). Residues 613–621 (LGEGQFGEV) and lysine 652 contribute to the ATP site. Phosphotyrosine; by autocatalysis is present on tyrosine 737. The active-site Proton acceptor is aspartate 763. Phosphotyrosine; by autocatalysis is present on residues tyrosine 789, tyrosine 793, and tyrosine 794.

This sequence belongs to the protein kinase superfamily. Tyr protein kinase family. Insulin receptor subfamily. In terms of assembly, homodimer. Interacts (via PPxY motif) with WWC1 (via WW domains) in a collagen-regulated manner. Forms a tripartite complex with WWC1 and PRKCZ, but predominantly in the absence of collagen. Interacts (tyrosine phosphorylated) with SHC1. Interacts with SRC. Interacts with MYH9. Interacts with CDH1. Interacts with PTPN11. Interacts with NCK2. In terms of processing, autophosphorylated in response to fibrillar collagen binding. As to expression, various embryonic and adult tissues; also proliferative zones of the developing brain; hippocampal neurons.

The protein localises to the cell membrane. It catalyses the reaction L-tyrosyl-[protein] + ATP = O-phospho-L-tyrosyl-[protein] + ADP + H(+). Functionally, tyrosine kinase that functions as a cell surface receptor for fibrillar collagen and regulates cell attachment to the extracellular matrix, remodeling of the extracellular matrix, cell migration, differentiation, survival and cell proliferation. Collagen binding triggers a signaling pathway that involves SRC and leads to the activation of MAP kinases. Regulates remodeling of the extracellular matrix by up-regulation of the matrix metalloproteinases MMP2, MMP7 and MMP9, and thereby facilitates cell migration and wound healing. Promotes smooth muscle cell migration, and thereby contributes to arterial wound healing. Also plays a role in tumor cell invasion. Phosphorylates PTPN11. Required for normal blastocyst implantation during pregnancy, for normal mammary gland differentiation and normal lactation. Required for normal ear morphology and normal hearing. In Rattus norvegicus (Rat), this protein is Epithelial discoidin domain-containing receptor 1 (Ddr1).